The primary structure comprises 142 residues: Cytochrome b5-related protein (142 aa).

The Cytochrome b5 heme-binding domain maps to 16-100 (PTYRNSAPVT…IAKYKVRDAY (85 aa)). Residues His59 and His82 each contribute to the heme site.

This sequence belongs to the cytochrome b5 family.

In terms of biological role, may play a role in muscle cell metabolism. This is Cytochrome b5-related protein (Cyt-b5-r) from Drosophila virilis (Fruit fly).